We begin with the raw amino-acid sequence, 346 residues long: Anthranilate phosphoribosyltransferase (346 aa).

5-phospho-alpha-D-ribose 1-diphosphate-binding positions include G88, 91-92 (GD), T96, 98-101 (NIST), 116-124 (KHGNRAVSS), and A128. Position 88 (G88) interacts with anthranilate. S100 serves as a coordination point for Mg(2+). N119 contributes to the anthranilate binding site. R174 is a binding site for anthranilate. 2 residues coordinate Mg(2+): D233 and E234.

Belongs to the anthranilate phosphoribosyltransferase family. Homodimer. Mg(2+) serves as cofactor.

It catalyses the reaction N-(5-phospho-beta-D-ribosyl)anthranilate + diphosphate = 5-phospho-alpha-D-ribose 1-diphosphate + anthranilate. It participates in amino-acid biosynthesis; L-tryptophan biosynthesis; L-tryptophan from chorismate: step 2/5. Functionally, catalyzes the transfer of the phosphoribosyl group of 5-phosphorylribose-1-pyrophosphate (PRPP) to anthranilate to yield N-(5'-phosphoribosyl)-anthranilate (PRA). This chain is Anthranilate phosphoribosyltransferase, found in Paramagnetospirillum magneticum (strain ATCC 700264 / AMB-1) (Magnetospirillum magneticum).